The primary structure comprises 698 residues: Pheromone-regulated protein PRM7 (698 aa).

Disordered stretches follow at residues 1–65 (MYRT…IGNS), 133–183 (ESTT…SAVT), 197–274 (SVDQ…TVTI), and 455–480 (SASS…DSKT). 2 stretches are compositionally biased toward low complexity: residues 9–56 (EVTT…TTSA) and 158–183 (VTTS…SAVT). Residues 455 to 465 (SASSSRSSATS) are compositionally biased toward low complexity.

This Saccharomyces cerevisiae (strain ATCC 204508 / S288c) (Baker's yeast) protein is Pheromone-regulated protein PRM7 (PRM7).